We begin with the raw amino-acid sequence, 1197 residues long: DNA-directed RNA polymerase subunit beta (1197 aa).

The span at 1172–1185 shows a compositional bias: basic and acidic residues; that stretch reads KEQEEKKAQQEAEK. Positions 1172 to 1197 are disordered; the sequence is KEQEEKKAQQEAEKAQAASAEDPSAE. Low complexity predominate over residues 1186-1197; it reads AQAASAEDPSAE.

Belongs to the RNA polymerase beta chain family. In terms of assembly, the RNAP catalytic core consists of 2 alpha, 1 beta, 1 beta' and 1 omega subunit. When a sigma factor is associated with the core the holoenzyme is formed, which can initiate transcription.

The enzyme catalyses RNA(n) + a ribonucleoside 5'-triphosphate = RNA(n+1) + diphosphate. Functionally, DNA-dependent RNA polymerase catalyzes the transcription of DNA into RNA using the four ribonucleoside triphosphates as substrates. In Latilactobacillus sakei subsp. sakei (strain 23K) (Lactobacillus sakei subsp. sakei), this protein is DNA-directed RNA polymerase subunit beta.